The chain runs to 538 residues: MFS-type transporter oryC (538 aa).

6 helical membrane passes run 14-34 (LTGGWLTFWVTVACATDMSLF), 67-87 (TVTAIYDVGCFFGAIVAFTIG), 96-116 (ILLGTTIMAIGAVLQAASFSL), 120-140 (FVGRIILGIGNGINTATAPIW), 162-182 (IFGFCLVNWINYGLSFVGGSI), and 186-206 (FPLAFQFFFLIILWSTTPWLP). The N-linked (GlcNAc...) asparagine glycan is linked to asparagine 268. 6 consecutive transmembrane segments (helical) span residues 288–308 (FGGINIMSYYLPTVLMDSVGL), 315–335 (LLAACNALSYLVFSGLAVLLV), 342–362 (GLMLLSTFGQFLCFLIITILL), 379–399 (VAFFFLYYGAFGIGMLGVPWL), 416–436 (VATATDWITNFVVVEITPIGI), and 443–463 (FWIVWTVTNAAFLPILYFLYP). Asparagine 467 is a glycosylation site (N-linked (GlcNAc...) asparagine).

This sequence belongs to the major facilitator superfamily. Sugar transporter (TC 2.A.1.1) family.

Its subcellular location is the membrane. In terms of biological role, MFS-type transporter; part of the gene cluster that mediates the biosynthesis of oryzines, natural products with an unusual maleidride backbone. The polypeptide is MFS-type transporter oryC (Aspergillus oryzae (strain ATCC 42149 / RIB 40) (Yellow koji mold)).